The following is a 322-amino-acid chain: Thioredoxin reductase (322 aa).

Residues 12–15, 34–42, asparagine 51, and valine 84 contribute to the FAD site; these read SGPA and EGAVTAGGA. Cysteines 136 and 139 form a disulfide. NADP(+)-binding residues include histidine 176, arginine 182, and tyrosine 259. FAD contacts are provided by residues aspartate 279 and 286–289; that span reads RQAI. Arginine 286 provides a ligand contact to NADP(+).

This sequence belongs to the class-II pyridine nucleotide-disulfide oxidoreductase family. As to quaternary structure, homodimer. It depends on FAD as a cofactor.

The enzyme catalyses [thioredoxin]-dithiol + NADP(+) = [thioredoxin]-disulfide + NADPH + H(+). Functionally, component of the thioredoxin-thioredoxin reductase system which may be involved in biosynthesis of penicillins and cephalosporins and may be important in determining the thiol-disulfide redox balance. The chain is Thioredoxin reductase from Streptomyces clavuligerus.